A 150-amino-acid chain; its full sequence is MSKTLSFKTYSAKPGEVERAWYVIDAENQVLGRLAAQVATVLRGKHKPQFTPHVDTGDFVVVTNAGKIALSGKKHDDKTYFSHSHYPGGAKFEQAKDLLQKKPEKVIEHAVWGMLPHNNLGRQLFKKLKVYAGPEHPHAAQMPVEMKVNQ.

The protein belongs to the universal ribosomal protein uL13 family. In terms of assembly, part of the 50S ribosomal subunit.

This protein is one of the early assembly proteins of the 50S ribosomal subunit, although it is not seen to bind rRNA by itself. It is important during the early stages of 50S assembly. The sequence is that of Large ribosomal subunit protein uL13 from Chlorobaculum parvum (strain DSM 263 / NCIMB 8327) (Chlorobium vibrioforme subsp. thiosulfatophilum).